Consider the following 915-residue polypeptide: MDIPQGGVIMNHFALALRGLNCMGCARKLERQLNQDLTVEIETLTPTSIELHTHATLNEVLTSIESLGYQGGTEQTYQLQGLNCGRCVNKLTTHLSAQAEIAKLHVSKERLSLVTTLTAEQVKALVAEVGYQAIEAEQESTFAPAASIDEKETDTPDAENSSNTEATEASSQTLSLLIKGMTCASCVASVEKALLSVEGVQSAQVNLTEQSALVRGIFANPQPLLNAIQSSGYQAEILDDPAQQQAKQQAQLEALQKEHKQSALLGIALGTPLMLWGVFGGNMMIRNSSDQMVWGGIGTICFALLLTAGRHFFMNAWQALTHGRATMDTLVALGTGAAWFYSMLVVAWPQTFPDAARHVYFEATAMIIGLISLGHYIETKAKSNTNRSLQALLNLQPQQATLVTEQGDQSIAVADIQLGMSLRIKPGEQVPVDGVVSTGHSYLDESMLTGEPIPVLKEAGAKVAAGTLNQDGSLVITATGIGAQTMLARIIQMVRQAQSSKPAMARLADQISSVFVPVVVVIAILSAALWYLYGPDPKASYMLVVATTVLIIACPCALGLATPLSITVGIGKAAEMGILIRDANVLQTASQVDTVVFDKTGTLTLGKPSIQSLHVLQGDENQLLALAYALEQQSEHPLAKAICDYAKQRNISPVEISQFTNQRGRGLLADYQNQTVLVGSLAFMQEQGIDLSMAESTLEKFAAQAWTPVAVAYRGMLQGVLAIADPIKPTSAQAVRKLNELGIHTVMLTGDHTSVANAIAKELGISQVIAQVLPDQKAQHIQALQQQGRKVAMIGDGINDAPALALADIGIAMGSGSDVAIESAQMTLLNSSPTSVVSAIELSKATLRNMKQNLFGAFIYNTLGIPIAAGVLYPAFGFLLSPVVAGAAMALSSITVVSNANRLRWSKISFDQHSQ.

2 consecutive HMA domains span residues 11-72 (NHFA…YQGG) and 73-134 (TEQT…YQAI). The Cu(+) site is built by C22, C25, C84, and C87. The interval 142–169 (FAPAASIDEKETDTPDAENSSNTEATEA) is disordered. Polar residues predominate over residues 158–169 (AENSSNTEATEA). The HMA 3 domain occupies 172–236 (QTLSLLIKGM…AIQSSGYQAE (65 aa)). Cu(+) is bound by residues C183 and C186. The next 7 helical transmembrane spans lie at 265 to 285 (LGIA…NMMI), 293 to 313 (VWGG…RHFF), 329 to 349 (TLVA…VAWP), 359 to 379 (VYFE…YIET), 474 to 494 (LVIT…IQMV), 514 to 534 (VFVP…YLYG), and 541 to 561 (YMLV…LGLA). D598 serves as the catalytic 4-aspartylphosphate intermediate. Residues D796 and D800 each coordinate Mg(2+). 2 helical membrane-spanning segments follow: residues 801-821 (APAL…DVAI) and 865-885 (IPIA…PVVA).

The protein belongs to the cation transport ATPase (P-type) (TC 3.A.3) family. Type IB subfamily.

The protein resides in the cell membrane. The enzyme catalyses Cu(+)(in) + ATP + H2O = Cu(+)(out) + ADP + phosphate + H(+). Its function is as follows. Involved in copper export. This is Copper-exporting P-type ATPase (copA) from Vibrio cholerae serotype O1 (strain ATCC 39315 / El Tor Inaba N16961).